The primary structure comprises 1466 residues: MAAHAEELVLNNTSILNVNMSNVTKLTSTNYLMWSRQVHALFDGYELAGFLDGSTTMPPATIGTDAAPRVNPDYTRWKRQDKLIYSAVLGAISMSVQPAVSRATTAAQIWETLRKIYANPSYGHVTQLRTQLKQWTKGTKTIDDYMQGLVTRFDQLALLGKPMDHDEQVERVLENLPEEYKPVIDQIAAKDTPPTLTEIHERLLNHESKILAVSSATVIPITANAVSHRNTTTTNNNNNGNRNNRYDNRNNNNNSKPWQQSSTNFHPNNNQSKPYLGKCQICGVQGHSAKRCSQLQHFLSSVNSQQPPSPFTPWQPRANLALGSPYSSNNWLLDSGATHHITSDFNNLSLHQPYTGGDDVMVADGSTIPISHTGSTSLSTKSRPLNLHNILYVPNIHKNLISVYRLCNANGVSVEFFPASFQVKDLNTGVPLLQGKTKDELYEWPIASSQPVSLFASPSSKATHSSWHARLGHPAPSILNSVISNYSLSVLNPSHKFLSCSDCLINKSNKVPFSQSTINSTRPLEYIYSDVWSSPILSHDNYRYYVIFVDHFTRYTWLYPLKQKSQVKETFITFKNLLENRFQTRIGTFYSDNGGEFVALWEYFSQHGISHLTSPPHTPEHNGLSERKHRHIVETGLTLLSHASIPKTYWPYAFAVAVYLINRLPTPLLQLESPFQKLFGTSPNYDKLRVFGCACYPWLRPYNQHKLDDKSRQCVFLGYSLTQSAYLCLHLQTSRLYISRHVRFDENCFPFSNYLATLSPVQEQRRESSCVWSPHTTLPTRTPVLPAPSCSDPHHAATPPSSPSAPFRNSQVSSSNLDSSFSSSFPSSPEPTAPRQNGPQPTTQPTQTQTQTHSSQNTSQNNPTNESPSQLAQSLSTPAQSSSSSPSPTTSASSSSTSPTPPSILIHPPPPLAQIVNNNNQAPLNTHSMGTRAKAGIIKPNPKYSLAVSLAAESEPRTAIQALKDERWRNAMGSEINAQIGNHTWDLVPPPPSHVTIVGCRWIFTKKYNSDGSLNRYKARLVAKGYNQRPGLDYAETFSPVIKSTSIRIVLGVAVDRSWPIRQLDVNNAFLQGTLTDDVYMSQPPGFIDKDRPNYVCKLRKALYGLKQAPRAWYVELRNYLLTIGFVNSVSDTSLFVLQRGKSIVYMLVYVDDILITGNDPTLLHNTLDNLSQRFSVKDHEELHYFLGIEAKRVPTGLHLSQRRYILDLLARTNMITAKPVTTPMAPSPKLSLYSGTKLTDPTEYRGIVGSLQYLAFTRPDISYAVNRLSQFMHMPTEEHLQALKRILRYLAGTPNHGIFLKKGNTLSLHAYSDADWAGDKDDYVSTNGYIVYLGHHPISWSSKKQKGVVRSSTEAEYRSVANTSSEMQWICSLLTELGIRLTRPPVIYCDNVGATYLCANPVFHSRMKHIAIDYHFIRNQVQSGALRVVHVSTHDQLADTLTKPLSRTAFQNFASKIGVTRVPPS.

Residues 227–270 (SHRNTTTTNNNNNGNRNNRYDNRNNNNNSKPWQQSSTNFHPNNN) are disordered. A compositionally biased stretch (low complexity) spans 229–254 (RNTTTTNNNNNGNRNNRYDNRNNNNN). Positions 255 to 270 (SKPWQQSSTNFHPNNN) are enriched in polar residues. The segment at 278-294 (KCQICGVQGHSAKRCSQ) adopts a CCHC-type zinc-finger fold. Asp-334 functions as the For protease activity in the catalytic mechanism. The 164-residue stretch at 519–682 (NSTRPLEYIY…SPFQKLFGTS (164 aa)) folds into the Integrase catalytic domain. Mg(2+) is bound by residues Asp-530 and Asp-592. The segment at 772–927 (WSPHTTLPTR…NNNQAPLNTH (156 aa)) is disordered. 2 stretches are compositionally biased toward low complexity: residues 796–827 (AATP…SFPS) and 836–898 (QNGP…SSTS). Pro residues predominate over residues 899–912 (PTPPSILIHPPPPL). The segment covering 915 to 927 (IVNNNNQAPLNTH) has biased composition (polar residues). Residues 982–1225 (NHTWDLVPPP…ITAKPVTTPM (244 aa)) enclose the Reverse transcriptase Ty1/copia-type domain.

The enzyme catalyses DNA(n) + a 2'-deoxyribonucleoside 5'-triphosphate = DNA(n+1) + diphosphate. The polypeptide is Retrovirus-related Pol polyprotein from transposon RE1 (RE1) (Arabidopsis thaliana (Mouse-ear cress)).